Reading from the N-terminus, the 557-residue chain is Myo-inositol transporter 2 (557 aa).

The Cytoplasmic segment spans residues 1-76 (MDFNNIPLAT…ENGEGFEAEK (76 aa)). A disordered region spans residues 24-69 (EMTTRPSETKKKVPFSEDMREIPSLPNEEEANATDPQANEVADENG). Positions 30 to 44 (SETKKKVPFSEDMRE) are enriched in basic and acidic residues. Residues 77–97 (ISSWIWVLSAVAGISGLLFGY) traverse the membrane as a helical segment. At 98–99 (DT) the chain is on the extracellular side. Residues 100-120 (GVISGALAVLGSDLGHVLSSG) form a helical membrane-spanning segment. Topologically, residues 121–123 (QKE) are cytoplasmic. The chain crosses the membrane as a helical span at residues 124 to 144 (LITSATSFAALISATTSGWLA). Topologically, residues 145–157 (DWVGRKRLLLCAD) are extracellular. A helical transmembrane segment spans residues 158–178 (AIFVIGSVIMAASRNVAMMVV). The Cytoplasmic portion of the chain corresponds to 179-180 (GR). A helical transmembrane segment spans residues 181 to 201 (FIVGYGIGLTSLIVPMYITEL). Over 202–209 (APARLRGR) the chain is Extracellular. The chain crosses the membrane as a helical span at residues 210–230 (LVIIYVVFITGGQLIAYSLNA). The Cytoplasmic segment spans residues 231-240 (AFEHVHQGWR). A helical membrane pass occupies residues 241 to 261 (IMFGIGAAPALGQLISLFWTP). Over 262-367 (ESPRYLLRHN…IFQSVGFKNS (106 aa)) the chain is Extracellular. Residues 368-388 (ISVSIVVGATNFVFTIVAFMF) traverse the membrane as a helical segment. Residues 389–396 (IDRIGRRR) are Cytoplasmic-facing. A helical membrane pass occupies residues 397 to 417 (ILLCTSAVMIAGLALCAIAYH). Residues 418-432 (FLPADTTQNTNSGWQ) are Extracellular-facing. Residues 433–453 (YVVLASIIIFLASYASGIGNI) form a helical membrane-spanning segment. The Cytoplasmic portion of the chain corresponds to 454–468 (PWQQAELFPMEVRAL). The chain crosses the membrane as a helical span at residues 469–489 (GAGFSTAINWVGNLIISASFL). At 490-498 (TMMESITPT) the chain is on the extracellular side. Residues 499 to 519 (GTFALFAGFCFVGLVTSYFTY) form a helical membrane-spanning segment. At 520–557 (PELAGMSIENIHKLLEKGFWQAVKESTKRVRKGRIDEA) the chain is on the cytoplasmic side.

It belongs to the major facilitator superfamily. Sugar transporter (TC 2.A.1.1) family.

The protein resides in the membrane. The catalysed reaction is myo-inositol(out) + H(+)(out) = myo-inositol(in) + H(+)(in). Functionally, transporter for myo-inositol. This Schizosaccharomyces pombe (strain 972 / ATCC 24843) (Fission yeast) protein is Myo-inositol transporter 2 (itr2).